The following is a 294-amino-acid chain: 4-hydroxybenzoate octaprenyltransferase (294 aa).

A run of 8 helical transmembrane segments spans residues 24 to 44 (IGIL…ADGF), 47 to 67 (LHLI…GCVI), 99 to 119 (LLAA…DPLV), 139 to 159 (FLAI…PMGF), 164 to 184 (GEVP…AVAY), 213 to 233 (VAAV…VGIA), 238 to 258 (PWFF…YTLI), and 274 to 294 (NWVG…FPAA).

Belongs to the UbiA prenyltransferase family. Mg(2+) is required as a cofactor.

It is found in the cell inner membrane. The enzyme catalyses all-trans-octaprenyl diphosphate + 4-hydroxybenzoate = 4-hydroxy-3-(all-trans-octaprenyl)benzoate + diphosphate. Its pathway is cofactor biosynthesis; ubiquinone biosynthesis. Catalyzes the prenylation of para-hydroxybenzoate (PHB) with an all-trans polyprenyl group. Mediates the second step in the final reaction sequence of ubiquinone-8 (UQ-8) biosynthesis, which is the condensation of the polyisoprenoid side chain with PHB, generating the first membrane-bound Q intermediate 3-octaprenyl-4-hydroxybenzoate. The chain is 4-hydroxybenzoate octaprenyltransferase from Aromatoleum aromaticum (strain DSM 19018 / LMG 30748 / EbN1) (Azoarcus sp. (strain EbN1)).